Consider the following 305-residue polypeptide: tRNA dimethylallyltransferase (305 aa).

8–15 is a binding site for ATP; the sequence is GPTGTGKS. Residue 10–15 participates in substrate binding; sequence TGTGKS.

The protein belongs to the IPP transferase family. Monomer. The cofactor is Mg(2+).

The catalysed reaction is adenosine(37) in tRNA + dimethylallyl diphosphate = N(6)-dimethylallyladenosine(37) in tRNA + diphosphate. In terms of biological role, catalyzes the transfer of a dimethylallyl group onto the adenine at position 37 in tRNAs that read codons beginning with uridine, leading to the formation of N6-(dimethylallyl)adenosine (i(6)A). The polypeptide is tRNA dimethylallyltransferase (Mycobacterium sp. (strain KMS)).